The sequence spans 289 residues: NFIL3 like protein (289 aa).

A disordered region spans residues 1–27 (MDVGFSGLPDVSQSHSKTLWGARGRGP). One can recognise a bZIP domain in the interval 42–105 (DTVYWEKRRK…GLLPLTGGPR (64 aa)). The segment at 48-64 (KRRKNNEAAKRSREKRR) is basic motif. The interval 70–91 (IEGRLAALMEENALLKGELKAL) is leucine-zipper.

This sequence belongs to the bZIP family. NFIL3 subfamily.

Its subcellular location is the nucleus. This is NFIL3 like protein from Homo sapiens (Human).